A 382-amino-acid polypeptide reads, in one-letter code: UDP-4-amino-4-deoxy-L-arabinose--oxoglutarate aminotransferase (382 aa).

K182 carries the N6-(pyridoxal phosphate)lysine modification.

The protein belongs to the DegT/DnrJ/EryC1 family. ArnB subfamily. In terms of assembly, homodimer. Requires pyridoxal 5'-phosphate as cofactor.

The catalysed reaction is UDP-4-amino-4-deoxy-beta-L-arabinose + 2-oxoglutarate = UDP-beta-L-threo-pentopyranos-4-ulose + L-glutamate. It participates in nucleotide-sugar biosynthesis; UDP-4-deoxy-4-formamido-beta-L-arabinose biosynthesis; UDP-4-deoxy-4-formamido-beta-L-arabinose from UDP-alpha-D-glucuronate: step 2/3. Its pathway is bacterial outer membrane biogenesis; lipopolysaccharide biosynthesis. Its function is as follows. Catalyzes the conversion of UDP-4-keto-arabinose (UDP-Ara4O) to UDP-4-amino-4-deoxy-L-arabinose (UDP-L-Ara4N). The modified arabinose is attached to lipid A and is required for resistance to polymyxin and cationic antimicrobial peptides. This is UDP-4-amino-4-deoxy-L-arabinose--oxoglutarate aminotransferase from Yersinia enterocolitica serotype O:8 / biotype 1B (strain NCTC 13174 / 8081).